The primary structure comprises 248 residues: PF03932 family protein CutC (248 aa).

Belongs to the CutC family. In terms of assembly, homodimer.

Its subcellular location is the cytoplasm. The polypeptide is PF03932 family protein CutC (Salmonella paratyphi B (strain ATCC BAA-1250 / SPB7)).